The chain runs to 487 residues: ATP-dependent 6-phosphofructokinase (487 aa).

ATP contacts are provided by residues glycine 107, 173–174 (RG), 198–201 (GDGT), and lysine 226. Aspartate 199 contributes to the Mg(2+) binding site. Residues 227 to 229 (TID), 272 to 274 (MGR), and glutamate 325 each bind substrate. The Proton acceptor role is filled by aspartate 229. 341–343 (SGN) serves as a coordination point for ATP. Residue 380–383 (YMIR) participates in substrate binding. A Peroxisomal targeting signal motif is present at residues 485 to 487 (AKL).

Belongs to the phosphofructokinase type A (PFKA) family. PPi-dependent PFK group II subfamily. Atypical ATP-dependent clade 'X' sub-subfamily. In terms of assembly, homotetramer. The cofactor is Mg(2+).

Its subcellular location is the glycosome. It catalyses the reaction beta-D-fructose 6-phosphate + ATP = beta-D-fructose 1,6-bisphosphate + ADP + H(+). It functions in the pathway carbohydrate degradation; glycolysis; D-glyceraldehyde 3-phosphate and glycerone phosphate from D-glucose: step 3/4. Allosterically activated by AMP. Functionally, catalyzes the phosphorylation of D-fructose 6-phosphate to fructose 1,6-bisphosphate by ATP, the first committing step of glycolysis. This is ATP-dependent 6-phosphofructokinase from Trypanosoma brucei brucei.